A 190-amino-acid chain; its full sequence is Probable E3 ubiquitin-protein ligase RHB1A (190 aa).

An RING-type; atypical zinc finger spans residues 139-180 (CPICFEDYDVENPRLTTKCEHEFHLSCLLEWIERSDRCPICD).

The catalysed reaction is S-ubiquitinyl-[E2 ubiquitin-conjugating enzyme]-L-cysteine + [acceptor protein]-L-lysine = [E2 ubiquitin-conjugating enzyme]-L-cysteine + N(6)-ubiquitinyl-[acceptor protein]-L-lysine.. The protein operates within protein modification; protein ubiquitination. Its function is as follows. Probable E3 ubiquitin-protein ligase that may possess E3 ubiquitin ligase activity in vitro. In Arabidopsis thaliana (Mouse-ear cress), this protein is Probable E3 ubiquitin-protein ligase RHB1A.